The primary structure comprises 467 residues: Septin-10 (467 aa).

Residues 63 to 329 enclose the Septin-type G domain; sequence QGFCFNILCV…ELYRRCKLEE (267 aa). Residues 73 to 80 form a G1 motif region; the sequence is GETGIGKS. Residues 73-80, Gly128, 209-217, Gly263, and Arg278 contribute to the GTP site; these read GETGIGKS and KADTVSKTE. Residues 125–128 are G3 motif; the sequence is NTVG. Residues 208–211 are G4 motif; that stretch reads AKAD.

It belongs to the TRAFAC class TrmE-Era-EngA-EngB-Septin-like GTPase superfamily. Septin GTPase family. In terms of assembly, septins polymerize into heterooligomeric protein complexes that form filaments, and can associate with cellular membranes, actin filaments and microtubules. GTPase activity is required for filament formation. Interacts with ADGB. Proteolytically cleaved in vitro in a calmodulin-dependent manner.

It is found in the cytoplasm. The protein resides in the cytoskeleton. The protein localises to the cell projection. Its subcellular location is the cilium. It localises to the flagellum. Functionally, filament-forming cytoskeletal GTPase. May play a role in cytokinesis (Potential). The sequence is that of Septin-10 from Pongo abelii (Sumatran orangutan).